A 243-amino-acid chain; its full sequence is MAGHSKWANIQHRKGRQDAKRGKLWTKIIREITVAARAGGADPDSNPRLRMAWDKATDANMPKDNIQRAIQRGAGGADGESYEEVRYEGYGIGGAAVIVDCMTDNRTRTVAEVRHAFAKHGGNLGQEGSVAFMFKHCGQFVFAPGTSEETVMEAALEAGAEDVATDEEGVIEVVCAPADFTAVRQAFEAAGLKAEVDGVVMKALNETELTGEDAVKMQKLLDVLESLDDVQEVYTNVVFDEAQ.

A disordered region spans residues 1–21 (MAGHSKWANIQHRKGRQDAKR).

Belongs to the TACO1 family.

The protein localises to the cytoplasm. This chain is Probable transcriptional regulatory protein BP2308, found in Bordetella pertussis (strain Tohama I / ATCC BAA-589 / NCTC 13251).